The sequence spans 297 residues: Translational activator of cytochrome c oxidase 1 (297 aa).

Residues 20–45 (RGPGVRAAPPRDPRPSHPEPRGCGAA) are disordered. Positions 28 to 39 (PPRDPRPSHPEP) are enriched in basic and acidic residues. Positions 191 to 227 (VEVEDREKKAVNLERALEMAIEAGAEDVKETEDEEER) form a coiled coil.

This sequence belongs to the TACO1 family.

The protein resides in the mitochondrion. Its function is as follows. Acts as a translational activator of mitochondrially-encoded cytochrome c oxidase 1. In Homo sapiens (Human), this protein is Translational activator of cytochrome c oxidase 1 (TACO1).